The following is a 374-amino-acid chain: Lipopolysaccharide glucosyltransferase WaaG (374 aa).

Positions 15 and 19 each coordinate UDP-alpha-D-glucose. Positions Tyr103–Phe132 are membrane-interacting region. UDP-alpha-D-glucose-binding residues include Arg173, Arg208, Lys209, Arg261, Glu281, Ala283, Gly284, Ile285, Val286, and Glu289.

The protein belongs to the glycosyltransferase group 1 family. Glycosyltransferase 4 subfamily.

It localises to the cell inner membrane. Its pathway is bacterial outer membrane biogenesis; LPS core biosynthesis. With respect to regulation, inhibited by divalent metal ions such as Mg(2+), Mn(2+), Ca(2+), Zn(2+), Co(2+), Ni(2+) and Cu(2+). Functionally, glucosyltransferase involved in the biosynthesis of the core oligosaccharide region of lipopolysaccharide (LPS). Catalyzes the addition of the first outer-core glucose from UDP-glucose to the inner-core heptose II. Cannot use other sugar donors, such as UDP-galactose, UDP-glucuronic acid, UDP-galacuronic acid, GDP-mannose, ADP-glucose and GDP-glucose. In the absence of a lipid acceptor, can slowly hydrolyze UDP-glucose. The sequence is that of Lipopolysaccharide glucosyltransferase WaaG from Escherichia coli (strain K12).